The following is a 256-amino-acid chain: uncharacterized protein (256 aa).

9 to 33 (VTGGGQGIGAAIAQLFAENGMKVVI) serves as a coordination point for NADP(+). Serine 140 contacts substrate. Catalysis depends on tyrosine 153, which acts as the Proton acceptor.

This sequence belongs to the short-chain dehydrogenases/reductases (SDR) family.

This is an uncharacterized protein from Thermotoga maritima (strain ATCC 43589 / DSM 3109 / JCM 10099 / NBRC 100826 / MSB8).